The primary structure comprises 83 residues: Turripeptide Lol11.2 (83 aa).

The signal sequence occupies residues 1 to 27 (MARLMMTVGCLIFIVVLLDMMVPVSNT).

Belongs to the conopeptide I2-like superfamily. Post-translationally, contains 4 disulfide bonds. In terms of tissue distribution, expressed by the venom duct.

The protein localises to the secreted. Functionally, acts as a neurotoxin by inhibiting voltage-gated potassium channels (Kv). This chain is Turripeptide Lol11.2, found in Iotyrris olangoensis (Sea snail).